Here is a 358-residue protein sequence, read N- to C-terminus: Phosphate acyltransferase (358 aa).

It belongs to the PlsX family. Homodimer. Probably interacts with PlsY.

Its subcellular location is the cytoplasm. It catalyses the reaction a fatty acyl-[ACP] + phosphate = an acyl phosphate + holo-[ACP]. It participates in lipid metabolism; phospholipid metabolism. Catalyzes the reversible formation of acyl-phosphate (acyl-PO(4)) from acyl-[acyl-carrier-protein] (acyl-ACP). This enzyme utilizes acyl-ACP as fatty acyl donor, but not acyl-CoA. This is Phosphate acyltransferase from Escherichia fergusonii (strain ATCC 35469 / DSM 13698 / CCUG 18766 / IAM 14443 / JCM 21226 / LMG 7866 / NBRC 102419 / NCTC 12128 / CDC 0568-73).